We begin with the raw amino-acid sequence, 140 residues long: HTH-type transcriptional regulator YfmP (140 aa).

In terms of domain architecture, HTH merR-type spans 1 to 73; sequence MEWMKIDQVA…LQELQHFMET (73 aa). The H-T-H motif DNA-binding region spans 6–25; it reads IDQVAKRSGLTKRTIRFYEE.

In terms of biological role, repressor of the yfmOP operon. A mutation in yfmP leads to overexpression of yfmO, probably causing a decrease in cellular copper that is eventually responsible for a reduced copper induction of copZA. In Bacillus subtilis (strain 168), this protein is HTH-type transcriptional regulator YfmP (yfmP).